The primary structure comprises 153 residues: Pheromone-binding protein Gp-9 (153 aa).

Residues 1 to 19 (MKTFVLHIFIFAFVAFASA) form the signal peptide. Cystine bridges form between Cys-37–Cys-77, Cys-73–Cys-129, and Cys-118–Cys-138.

Belongs to the PBP/GOBP family. Homodimer.

It localises to the secreted. Colony queen number, a major feature of social organization, is associated with worker genotype for Gp-9. Colonies are headed by either a single reproductive queen (monogyne form) or multiple queens (polygyne form). Differences in worker Gp-9 genotypes between social forms may cause differences in workers' abilities to recognize queens and regulate their numbers. This Solenopsis amblychila (Desert fire ant) protein is Pheromone-binding protein Gp-9.